Reading from the N-terminus, the 255-residue chain is Zinc finger CCCH domain-containing protein 37 (255 aa).

2 consecutive C3H1-type zinc fingers follow at residues 98–128 and 137–159; these read AYTG…HGTF and YRTR…AHTA.

The protein is Zinc finger CCCH domain-containing protein 37 of Oryza sativa subsp. japonica (Rice).